The sequence spans 139 residues: uncharacterized protein (139 aa).

2 helical membrane passes run 71-91 (LFSALLMYIVQLFTLLVATLL) and 97-117 (ENELIRAILIFMLTALSFVMV).

This sequence belongs to the RseC family.

It is found in the cell inner membrane. This is an uncharacterized protein from Haemophilus influenzae (strain ATCC 51907 / DSM 11121 / KW20 / Rd).